Consider the following 593-residue polypeptide: Probable serine/threonine-protein kinase samkB (593 aa).

The 65-residue stretch at 29–93 (WNNEAVCEWL…SIFKKLKNNN (65 aa)) folds into the SAM domain. The disordered stretch occupies residues 108-157 (ESNSINNSNNNNNNNNNNNNNNNNNNNNNNNNNNNNNNNNNNNNNNKIDT). The span at 113 to 153 (NNSNNNNNNNNNNNNNNNNNNNNNNNNNNNNNNNNNNNNNN) shows a compositional bias: low complexity. A Protein kinase domain is found at 186 to 438 (YKLIEEIGRG…SKQLLEAQWF (253 aa)). Residues 192 to 200 (IGRGAFSIV) and Lys216 contribute to the ATP site. The active-site Proton acceptor is Asp313.

This sequence belongs to the protein kinase superfamily. Ser/Thr protein kinase family.

It carries out the reaction L-seryl-[protein] + ATP = O-phospho-L-seryl-[protein] + ADP + H(+). It catalyses the reaction L-threonyl-[protein] + ATP = O-phospho-L-threonyl-[protein] + ADP + H(+). This chain is Probable serine/threonine-protein kinase samkB (samkB), found in Dictyostelium discoideum (Social amoeba).